We begin with the raw amino-acid sequence, 276 residues long: MKIVVLGGSGFLGHNICKLAIAKGYEVVSVSRRGAGGLHNKEPWMDDVEWETLDAQKDPNSLLPVLRDASAVVNSVGILMENNYKKILQNPRGPVSHLINSLSSNMFKTGQNPLAPKPEEAKQSKNKVTFEAINRDLAIETAKIAAKANVPVYCYVSAHAAAPGLDPRYIKTKREAEREISKISNLRSIFLRPGFMYNFNDRPFTGALASLFTVSSSINRATSGALNFLGTASAEPLPSEEVALAALEAISDPSVKGPVEISELKSMAHKFKQKSL.

Belongs to the NAD(P)-dependent epimerase/dehydratase family.

Its subcellular location is the mitochondrion. Functionally, acts in the coenzyme Q biosynthetic pathway. This Schizosaccharomyces pombe (strain 972 / ATCC 24843) (Fission yeast) protein is Ubiquinone biosynthesis protein coq11, mitochondrial.